The following is an 81-amino-acid chain: Translational regulator CsrA (81 aa).

Belongs to the CsrA/RsmA family. Homodimer; the beta-strands of each monomer intercalate to form a hydrophobic core, while the alpha-helices form wings that extend away from the core.

It localises to the cytoplasm. In terms of biological role, a translational regulator that binds mRNA to regulate translation initiation and/or mRNA stability. Usually binds in the 5'-UTR at or near the Shine-Dalgarno sequence preventing ribosome-binding, thus repressing translation. Its main target seems to be the major flagellin gene, while its function is anatagonized by FliW. In Borreliella burgdorferi (strain ATCC 35210 / DSM 4680 / CIP 102532 / B31) (Borrelia burgdorferi), this protein is Translational regulator CsrA.